The following is a 1238-amino-acid chain: Virulence sensor protein BvgS (1238 aa).

A signal peptide spans 1-32 (MPAPHRLYPRSLICLAQALLVWALLAWAPAQA). The Cytoplasmic segment spans residues 33–307 (SQELTLVGKA…REQQWMANHP (275 aa)). The chain crosses the membrane as a helical span at residues 308–331 (VVKVAVLNLFAPFTLFRTDEQFGG). Over 332–541 (ISAAVLQLLQ…PRTWYAYRNE (210 aa)) the chain is Periplasmic. Residues 542–563 (IYLLIGLGLLSALLFLSWIVYL) form a helical membrane-spanning segment. Topologically, residues 564 to 1238 (RRQIRQRKRA…LEQRPHQGQP (675 aa)) are cytoplasmic. One can recognise a PAS domain in the interval 580-651 (QLEFMRVLID…MHEFLLTRMA (72 aa)). One can recognise a PAC domain in the interval 652 to 708 (AEREPRFEDRDVTLHGRTRHVYQWTVPYGDSLGELKGIIGGWIDITERAELLRELHD). The Histidine kinase domain maps to 726 to 948 (TMSHEIRTPM…TVSVDLRLTM (223 aa)). His729 carries the phosphohistidine; by autocatalysis modification. The 122-residue stretch at 974–1095 (RVLVVDDHKP…ALRQRLNEAA (122 aa)) folds into the Response regulatory domain. Asp1023 is modified (4-aspartylphosphate). An HPt domain is found at 1133–1228 (DEALIRQLLE…AALETQLRAW (96 aa)). His1172 bears the Phosphohistidine mark.

Post-translationally, activation requires a sequential transfer of a phosphate group from a His in the primary transmitter domain, to an Asp in the receiver domain and to a His in the secondary transmitter domain.

Its subcellular location is the cell inner membrane. It catalyses the reaction ATP + protein L-histidine = ADP + protein N-phospho-L-histidine.. In terms of biological role, member of the two-component regulatory system BvgS/BvgA. Phosphorylates BvgA via a four-step phosphorelay in response to environmental signals. The polypeptide is Virulence sensor protein BvgS (bvgS) (Bordetella parapertussis (strain 12822 / ATCC BAA-587 / NCTC 13253)).